Here is a 722-residue protein sequence, read N- to C-terminus: MLDRCEMPIQLDNEKLRRDVRLSGSRLDLPQLCNGSRRLDGHNNHVAANENTVTTTSLNGNGNGNGNSNSNNNNNIGSPVSSSTTNSSNGGNERGSSTKSNSSSGSGSSGNSASSTGSGELKCNTPMTPSELVKKFRNYLTDLEFEELKVYKEVWYFGQHASKNYNKPAPTANTTNLGYDDDNGNYKIIEHDHIAFRYEILEVIGKGSFGQVIRALDHKTNTHVAIKIIRNKKRFLNQAVVELNILDELREKDADGSHNVIHMLDYTYFRKHLCITFELMSLNLYELIKKNNYNGFSMSLIRRFCNSIVKCLRLLYKENIIHCDLKPENILLKQRGSSSIKVIDFGSSCYVDRKIYTYIQSRFYRSPEVILGLQYGTAIDMWSLGCILAELYTGFPLFPGENEVEQLACIMEVLGLPPKVLISVARRRRLFFDSRDAPRCITNTKGRKRSPGSKSLAHILHCQDRYFIDFLQRCLEWDPAERMTPDEAAHHEFLQPSASSRHRSCRMSSSSSSSGLNSVSQKSSCYSFSEISPGTNGPVVASITSTTAVHNAAIATTTKSRQQPPSQSHGHAQSNGHLPDIKLSASDKYNSMQKVAVRSKITSSVSDLESVQQYSLHRIYGGVGSGSTHHVSSAATRKHLPGTGSGIVGAMSSKYGSSTLAHNHHNVTHHNASTATIATTTHHHHHHGGQQQQQSSSGASTMAMSHSQSTGDVSDRAIFGRA.

Phosphoserine is present on Ser25. The tract at residues 54–127 is disordered; sequence TTTSLNGNGN…SGELKCNTPM (74 aa). Residues 66–119 are compositionally biased toward low complexity; that stretch reads GNSNSNNNNNIGSPVSSSTTNSSNGGNERGSSTKSNSSSGSGSSGNSASSTGSG. In terms of domain architecture, Protein kinase spans 198-494; sequence YEILEVIGKG…PDEAAHHEFL (297 aa). Residues 204 to 212 and Lys227 each bind ATP; that span reads IGKGSFGQV. Residue Asp324 is the Proton acceptor of the active site. A phosphotyrosine; by autocatalysis mark is found at Tyr356 and Tyr358. 4 disordered regions span residues 494 to 519, 557 to 582, 624 to 643, and 679 to 722; these read LQPS…LNSV, TTKS…PDIK, GSGS…LPGT, and TTTH…FGRA. The segment covering 506-519 has biased composition (low complexity); that stretch reads RMSSSSSSSGLNSV. A compositionally biased stretch (polar residues) spans 557 to 576; sequence TTKSRQQPPSQSHGHAQSNG. Composition is skewed to low complexity over residues 626–635 and 689–707; these read GSTHHVSSAA and GQQQ…MSHS.

This sequence belongs to the protein kinase superfamily. CMGC Ser/Thr protein kinase family. MNB/DYRK subfamily. Mg(2+) serves as cofactor. Post-translationally, phosphorylated on serine/threonine residues.

The protein localises to the cytoplasm. The enzyme catalyses L-seryl-[protein] + ATP = O-phospho-L-seryl-[protein] + ADP + H(+). It catalyses the reaction L-threonyl-[protein] + ATP = O-phospho-L-threonyl-[protein] + ADP + H(+). It carries out the reaction L-tyrosyl-[protein] + ATP = O-phospho-L-tyrosyl-[protein] + ADP + H(+). Its activity is regulated as follows. Autophosphorylates on Tyr-356 and Tyr-358. In vitro; can phosphorylate exogenous substrates on Ser and Thr residues. May have a physiological role in development being involved in cellular growth and differentiation. The sequence is that of Dual specificity tyrosine-phosphorylation-regulated kinase 2 from Drosophila melanogaster (Fruit fly).